A 314-amino-acid polypeptide reads, in one-letter code: Ribosomal RNA small subunit methyltransferase H (314 aa).

S-adenosyl-L-methionine contacts are provided by residues 34-36 (GGH), Asp54, Phe83, Asp104, and Gln111.

Belongs to the methyltransferase superfamily. RsmH family.

Its subcellular location is the cytoplasm. The enzyme catalyses cytidine(1402) in 16S rRNA + S-adenosyl-L-methionine = N(4)-methylcytidine(1402) in 16S rRNA + S-adenosyl-L-homocysteine + H(+). Functionally, specifically methylates the N4 position of cytidine in position 1402 (C1402) of 16S rRNA. This is Ribosomal RNA small subunit methyltransferase H from Ligilactobacillus salivarius (strain UCC118) (Lactobacillus salivarius).